A 500-amino-acid chain; its full sequence is Probable malate:quinone oxidoreductase (500 aa).

Belongs to the MQO family. Requires FAD as cofactor.

The enzyme catalyses (S)-malate + a quinone = a quinol + oxaloacetate. Its pathway is carbohydrate metabolism; tricarboxylic acid cycle; oxaloacetate from (S)-malate (quinone route): step 1/1. The protein is Probable malate:quinone oxidoreductase of Bacillus anthracis (strain A0248).